The following is a 428-amino-acid chain: C4-dicarboxylate transport protein (428 aa).

8 consecutive transmembrane segments (helical) span residues 8-28, 44-64, 78-98, 148-168, 184-204, 222-242, 307-327, and 355-375; these read VLYVQVIFAIVVGVILGHYYP, LIKMVIGPIIFCTVVTGIAGM, LLYFEIVSTCALVLGLAATHI, GEILQILLIALLFGSVLAHLG, VLFGIVHIVTKLAPIGAFGAM, LIGTFYLTSVVFVLVVLGAIA, IYMTMAVLFIAQATNIELTWM, and AATLAVVPTIPLSGMVLILGI.

It belongs to the dicarboxylate/amino acid:cation symporter (DAACS) (TC 2.A.23) family.

It localises to the cell inner membrane. In terms of biological role, responsible for the transport of dicarboxylates such as succinate, fumarate, and malate from the periplasm across the membrane. The polypeptide is C4-dicarboxylate transport protein (Burkholderia mallei (strain ATCC 23344)).